The following is a 330-amino-acid chain: Aspartate--ammonia ligase (330 aa).

This sequence belongs to the class-II aminoacyl-tRNA synthetase family. AsnA subfamily.

The protein resides in the cytoplasm. It carries out the reaction L-aspartate + NH4(+) + ATP = L-asparagine + AMP + diphosphate + H(+). The protein operates within amino-acid biosynthesis; L-asparagine biosynthesis; L-asparagine from L-aspartate (ammonia route): step 1/1. The sequence is that of Aspartate--ammonia ligase from Shigella boydii serotype 18 (strain CDC 3083-94 / BS512).